A 267-amino-acid chain; its full sequence is 4-hydroxy-tetrahydrodipicolinate reductase (267 aa).

An NAD(+)-binding site is contributed by 10 to 15; that stretch reads GAGGKM. An NADP(+)-binding site is contributed by Arg-38. NAD(+)-binding positions include 100-102 and 126-129; these read GTT and APNF. Catalysis depends on His-156, which acts as the Proton donor/acceptor. A (S)-2,3,4,5-tetrahydrodipicolinate-binding site is contributed by His-157. The Proton donor role is filled by Lys-160. 166 to 167 contacts (S)-2,3,4,5-tetrahydrodipicolinate; that stretch reads GT.

This sequence belongs to the DapB family.

Its subcellular location is the cytoplasm. It carries out the reaction (S)-2,3,4,5-tetrahydrodipicolinate + NAD(+) + H2O = (2S,4S)-4-hydroxy-2,3,4,5-tetrahydrodipicolinate + NADH + H(+). The enzyme catalyses (S)-2,3,4,5-tetrahydrodipicolinate + NADP(+) + H2O = (2S,4S)-4-hydroxy-2,3,4,5-tetrahydrodipicolinate + NADPH + H(+). The protein operates within amino-acid biosynthesis; L-lysine biosynthesis via DAP pathway; (S)-tetrahydrodipicolinate from L-aspartate: step 4/4. In terms of biological role, catalyzes the conversion of 4-hydroxy-tetrahydrodipicolinate (HTPA) to tetrahydrodipicolinate. This is 4-hydroxy-tetrahydrodipicolinate reductase from Desulfitobacterium hafniense (strain DSM 10664 / DCB-2).